The sequence spans 274 residues: Large ribosomal subunit protein uL2 (274 aa).

The tract at residues 220-265 (VRGAAMNPRDHPHGGGEGRAPRGMSTPKTKWGKPARGVKTRHNPRF) is disordered. Residues 227 to 239 (PRDHPHGGGEGRA) show a composition bias toward basic and acidic residues. Residues 249-262 (KWGKPARGVKTRHN) are compositionally biased toward basic residues.

This sequence belongs to the universal ribosomal protein uL2 family. Part of the 50S ribosomal subunit. Forms a bridge to the 30S subunit in the 70S ribosome.

One of the primary rRNA binding proteins. Required for association of the 30S and 50S subunits to form the 70S ribosome, for tRNA binding and peptide bond formation. It has been suggested to have peptidyltransferase activity; this is somewhat controversial. Makes several contacts with the 16S rRNA in the 70S ribosome. The sequence is that of Large ribosomal subunit protein uL2 from Chloroflexus aurantiacus (strain ATCC 29364 / DSM 637 / Y-400-fl).